The chain runs to 89 residues: Small ribosomal subunit protein uS14 (89 aa).

Belongs to the universal ribosomal protein uS14 family. In terms of assembly, part of the 30S ribosomal subunit. Contacts proteins S3 and S10.

Its function is as follows. Binds 16S rRNA, required for the assembly of 30S particles and may also be responsible for determining the conformation of the 16S rRNA at the A site. This is Small ribosomal subunit protein uS14 from Deinococcus radiodurans (strain ATCC 13939 / DSM 20539 / JCM 16871 / CCUG 27074 / LMG 4051 / NBRC 15346 / NCIMB 9279 / VKM B-1422 / R1).